Here is a 918-residue protein sequence, read N- to C-terminus: DNA mismatch repair protein MutS (918 aa).

662–669 (GPNMAGKS) contacts ATP.

This sequence belongs to the DNA mismatch repair MutS family.

In terms of biological role, this protein is involved in the repair of mismatches in DNA. It is possible that it carries out the mismatch recognition step. This protein has a weak ATPase activity. This chain is DNA mismatch repair protein MutS, found in Sorangium cellulosum (strain So ce56) (Polyangium cellulosum (strain So ce56)).